The following is a 424-amino-acid chain: 2,3-bisphosphoglycerate-independent phosphoglycerate mutase (424 aa).

This sequence belongs to the BPG-independent phosphoglycerate mutase family. A-PGAM subfamily.

It carries out the reaction (2R)-2-phosphoglycerate = (2R)-3-phosphoglycerate. The protein operates within carbohydrate degradation; glycolysis; pyruvate from D-glyceraldehyde 3-phosphate: step 3/5. Functionally, catalyzes the interconversion of 2-phosphoglycerate and 3-phosphoglycerate. The chain is 2,3-bisphosphoglycerate-independent phosphoglycerate mutase from Aeropyrum pernix (strain ATCC 700893 / DSM 11879 / JCM 9820 / NBRC 100138 / K1).